Here is a 177-residue protein sequence, read N- to C-terminus: Probable DNA-directed RNA polymerase subunit delta (177 aa).

Residues 14-81 (CSMIEVVHSV…GENRWGLRSW (68 aa)) form the HTH HARE-type domain. The disordered stretch occupies residues 90–177 (EILPQPKPKK…ETEEEEEEEL (88 aa)). The span at 106 to 177 (DGFDDYIEED…ETEEEEEEEL (72 aa)) shows a compositional bias: acidic residues.

This sequence belongs to the RpoE family. In terms of assembly, RNAP is composed of a core of 2 alpha, a beta and a beta' subunits. The core is associated with a delta subunit and one of several sigma factors.

In terms of biological role, participates in both the initiation and recycling phases of transcription. In the presence of the delta subunit, RNAP displays an increased specificity of transcription, a decreased affinity for nucleic acids, and an increased efficiency of RNA synthesis because of enhanced recycling. This chain is Probable DNA-directed RNA polymerase subunit delta, found in Bacillus cereus (strain B4264).